The chain runs to 266 residues: Heat-inducible transcription repressor HrcA (266 aa).

It belongs to the HrcA family.

In terms of biological role, negative regulator of class I heat shock genes (grpE-dnaK-dnaJ and groELS operons). Prevents heat-shock induction of these operons. This Helicobacter pylori (strain ATCC 700392 / 26695) (Campylobacter pylori) protein is Heat-inducible transcription repressor HrcA.